Reading from the N-terminus, the 336-residue chain is Anthranilate phosphoribosyltransferase (336 aa).

5-phospho-alpha-D-ribose 1-diphosphate-binding positions include Gly78, 81–82, Thr86, 88–91, 106–114, and Ser118; these read GD, NVST, and KHGNYSVSS. Gly78 contributes to the anthranilate binding site. Mg(2+) is bound at residue Ser90. Asn109 is a binding site for anthranilate. Arg164 lines the anthranilate pocket. Mg(2+) is bound by residues Asp222 and Glu223.

It belongs to the anthranilate phosphoribosyltransferase family. In terms of assembly, homodimer. Mg(2+) is required as a cofactor.

It carries out the reaction N-(5-phospho-beta-D-ribosyl)anthranilate + diphosphate = 5-phospho-alpha-D-ribose 1-diphosphate + anthranilate. Its pathway is amino-acid biosynthesis; L-tryptophan biosynthesis; L-tryptophan from chorismate: step 2/5. Its function is as follows. Catalyzes the transfer of the phosphoribosyl group of 5-phosphorylribose-1-pyrophosphate (PRPP) to anthranilate to yield N-(5'-phosphoribosyl)-anthranilate (PRA). The polypeptide is Anthranilate phosphoribosyltransferase (Halobacterium salinarum (strain ATCC 29341 / DSM 671 / R1)).